The chain runs to 1430 residues: DNA-directed RNA polymerase subunit beta' (1430 aa).

Positions 71, 73, 86, and 89 each coordinate Zn(2+). 3 residues coordinate Mg(2+): Asp-461, Asp-463, and Asp-465. The Zn(2+) site is built by Cys-815, Cys-889, Cys-896, and Cys-899. The disordered stretch occupies residues 1388-1430 (RRQEAPAPAATPEQQAEEVFASLGQGEGEGPSPSDEASGPEVE). Over residues 1392 to 1405 (APAPAATPEQQAEE) the composition is skewed to low complexity.

Belongs to the RNA polymerase beta' chain family. In terms of assembly, the RNAP catalytic core consists of 2 alpha, 1 beta, 1 beta' and 1 omega subunit. When a sigma factor is associated with the core the holoenzyme is formed, which can initiate transcription. It depends on Mg(2+) as a cofactor. The cofactor is Zn(2+).

It catalyses the reaction RNA(n) + a ribonucleoside 5'-triphosphate = RNA(n+1) + diphosphate. DNA-dependent RNA polymerase catalyzes the transcription of DNA into RNA using the four ribonucleoside triphosphates as substrates. This Halorhodospira halophila (strain DSM 244 / SL1) (Ectothiorhodospira halophila (strain DSM 244 / SL1)) protein is DNA-directed RNA polymerase subunit beta'.